The sequence spans 102 residues: Small ribosomal subunit protein bS6 (102 aa).

The protein belongs to the bacterial ribosomal protein bS6 family.

Its function is as follows. Binds together with bS18 to 16S ribosomal RNA. This Deinococcus radiodurans (strain ATCC 13939 / DSM 20539 / JCM 16871 / CCUG 27074 / LMG 4051 / NBRC 15346 / NCIMB 9279 / VKM B-1422 / R1) protein is Small ribosomal subunit protein bS6 (rpsF).